We begin with the raw amino-acid sequence, 938 residues long: Ankyrin repeat and LEM domain-containing protein 2 (938 aa).

The Lumenal segment spans residues 1 to 12 (MLWPRLAAAEWA). A helical; Signal-anchor for type III membrane protein membrane pass occupies residues 13-32 (ALAWELLGASVLLIAVRWLV). The Cytoplasmic segment spans residues 33-938 (RRLGPRPGGL…MARLAELAAL (906 aa)). The region spanning 69–113 (LARLKLLNPDDLREEIVKAGLKCGPITSTTRFIFEKKLAQALLEQ) is the LEM domain. 2 positions are modified to phosphoserine: S259 and S268. An ANK repeat occupies 411–440 (GYDTPLHFACKFGNADVVNVLSSHHLIVKN). S488, S496, S512, and S528 each carry phosphoserine. Positions 609-627 (GKKAQQETGEREASCRDKA) are enriched in basic and acidic residues. A disordered region spans residues 609-636 (GKKAQQETGEREASCRDKATTSGSNSIS). S662, S804, S896, and S914 each carry phosphoserine. The disordered stretch occupies residues 870-924 (RQSWPSPAVKGRFKSQLPDLSGPHSYSPGRNSVAGSNPAKPGLGSPGRYSPVHGS).

The protein belongs to the ANKLE2 family. As to quaternary structure, interacts with BAF/BANF1. Interacts with protein phosphatase 2A (PP2A) components PPP2C (PPP2CA or PPP2CB) and PPP2R1A. In terms of assembly, (Microbial infection) May interact with non-structural protein 4A/NS4A from Zika virus strains Mr-766 or French Polynesia 10087PF/2013; the interaction may inhibit ANKLE2 function and contribute to defects in brain development, such as microcephaly.

It is found in the endoplasmic reticulum membrane. In terms of biological role, involved in mitotic nuclear envelope reassembly by promoting dephosphorylation of BAF/BANF1 during mitotic exit. Coordinates the control of BAF/BANF1 dephosphorylation by inhibiting VRK1 kinase and promoting dephosphorylation of BAF/BANF1 by protein phosphatase 2A (PP2A), thereby facilitating nuclear envelope assembly. May regulate nuclear localization of VRK1 in non-dividing cells. It is unclear whether it acts as a real PP2A regulatory subunit or whether it is involved in recruitment of the PP2A complex. Involved in brain development. The polypeptide is Ankyrin repeat and LEM domain-containing protein 2 (ANKLE2) (Homo sapiens (Human)).